The chain runs to 124 residues: UPF0482 protein YpsIP31758_1865 (124 aa).

The first 32 residues, 1–32 (MMKINNLPRLIRTFLPATLLMLPLVWQTPALA), serve as a signal peptide directing secretion. Residues 47–68 (GGNNDPMSKEQARQSQQQWDET) are disordered.

The protein belongs to the UPF0482 family.

The chain is UPF0482 protein YpsIP31758_1865 from Yersinia pseudotuberculosis serotype O:1b (strain IP 31758).